The primary structure comprises 142 residues: Hemoglobin subunit alpha-A (142 aa).

In terms of domain architecture, Globin spans 2-142; sequence VLSPTDKSIV…VSTVLTSKYR (141 aa). His59 serves as a coordination point for O2. His88 contributes to the heme b binding site.

This sequence belongs to the globin family. In terms of assembly, heterotetramer of two alpha chains and two beta chains. As to expression, red blood cells.

Functionally, involved in oxygen transport from the lung to the various peripheral tissues. In Otolemur crassicaudatus (Brown greater galago), this protein is Hemoglobin subunit alpha-A (HBAA).